Here is a 788-residue protein sequence, read N- to C-terminus: Protocadherin beta-18 (788 aa).

The signal sequence occupies residues 1–28 (MEPGKGRAQPTRQVLLFFVFLGGSLVYS). 5 Cadherin domains span residues 29–133 (ETWS…TPTF), 134–242 (LNNH…APEF), 243–347 (EKPV…PPEI), 348–452 (AMTS…APAF), and 453–562 (TQTS…SPFV). Residues 29–691 (ETWSYSIAEE…AQADSLTVYL (663 aa)) are Extracellular-facing. Asparagine 169 carries an N-linked (GlcNAc...) asparagine glycan. N-linked (GlcNAc...) asparagine glycans are attached at residues asparagine 419 and asparagine 437. N-linked (GlcNAc...) asparagine glycosylation occurs at asparagine 568. The 104-residue stretch at 569–672 (GSAPCTELVP…LVDGFSQPYL (104 aa)) folds into the Cadherin 6 domain. The chain crosses the membrane as a helical span at residues 692 to 712 (VVALASVSSLFLFSVFLFVAV). Over 713 to 788 (RLCRRSRAAS…DSDMEKAPPF (76 aa)) the chain is Cytoplasmic.

It localises to the cell membrane. Its function is as follows. Potential calcium-dependent cell-adhesion protein. This Pan troglodytes (Chimpanzee) protein is Protocadherin beta-18 (PCDHB18).